The primary structure comprises 164 residues: B-phycoerythrin alpha chain (164 aa).

Cysteine 82 and cysteine 139 together coordinate (2R,3E)-phycoerythrobilin.

This sequence belongs to the phycobiliprotein family. As to quaternary structure, heteromer of 6 alpha, 6 beta and one gamma chain. In terms of processing, contains two covalently linked bilin chromophores.

It is found in the plastid. The protein resides in the chloroplast thylakoid membrane. In terms of biological role, light-harvesting photosynthetic bile pigment-protein from the phycobiliprotein complex. This Rhodella violacea (Red alga) protein is B-phycoerythrin alpha chain (cpeA).